A 730-amino-acid chain; its full sequence is Probable G-protein coupled receptor 149 (730 aa).

Residues 1–34 are Extracellular-facing; the sequence is MSFFLSNLTNDSRLWKVSHNSTDLMNSPETLTLS. N7, N10, and N20 each carry an N-linked (GlcNAc...) asparagine glycan. The chain crosses the membrane as a helical span at residues 35–55; that stretch reads LFCLICLMTLVALVGSIFSLV. The Cytoplasmic portion of the chain corresponds to 56–68; sequence SLLTMQYRTVVSM. A helical transmembrane segment spans residues 69 to 89; the sequence is LVTSWSVDDLLSVLSVAIFMV. Residues 90–108 lie on the Extracellular side of the membrane; the sequence is LQWPREAPGYFQSLCTTSA. Cysteines 104 and 181 form a disulfide. The helical transmembrane segment at 109-131 threads the bilayer; the sequence is LLYMCQGLSSNLKATLIVFYNFY. At 132 to 148 the chain is on the cytoplasmic side; the sequence is TMHRTVVSQSSSWRSGQ. A helical membrane pass occupies residues 149–169; the sequence is VLGVALTVWAVSLLLASLPLC. The Extracellular segment spans residues 170–188; sequence GWGVFVRTPWGCLTDCSSP. Residues 189–209 traverse the membrane as a helical segment; it reads YVLLLFAVYASAFGLLAVLSV. Residues 210–308 are Cytoplasmic-facing; sequence PLTHQLLCSE…SFPVSLAQKR (99 aa). A helical membrane pass occupies residues 309–329; the sequence is FALILALTKVILWLPMMIHMV. Residues 330–340 lie on the Extracellular side of the membrane; sequence VKHVVGFQSLP. Residues 341–361 form a helical membrane-spanning segment; the sequence is VDMLSFLLTLLASTVTPVFVL. Residues 362 to 730 are Cytoplasmic-facing; it reads SKRWAHLPCG…RKREAESKGN (369 aa).

It belongs to the G-protein coupled receptor 1 family. In terms of tissue distribution, expressed exclusively in brain and testis.

It localises to the cell membrane. Functionally, orphan receptor. This Rattus norvegicus (Rat) protein is Probable G-protein coupled receptor 149 (Gpr149).